Consider the following 475-residue polypeptide: Ankyrin repeat, SAM and basic leucine zipper domain-containing protein 1 (475 aa).

Residues 1-24 (MAAGTVRGLAVAGGGESSESEDDG) form a disordered region. Phosphoserine is present on residues serine 17, serine 18, and serine 20. ANK repeat units follow at residues 45-74 (EKNE…SVDS), 78-107 (YGWT…NASF), 110-144 (DKQT…DPNV), 148-177 (RLMT…EVNA), 181-210 (NGYT…NKML), and 214-243 (DGKT…PLEG). The region spanning 272 to 334 (SYTAFGDLEI…KILAALKELE (63 aa)) is the SAM domain.

Interacts with DDX4, PIWIL1, RANBP9 and TDRD1.

The protein resides in the cytoplasm. Its function is as follows. Plays a central role during spermatogenesis by repressing transposable elements and preventing their mobilization, which is essential for the germline integrity. Acts via the piRNA metabolic process, which mediates the repression of transposable elements during meiosis by forming complexes composed of piRNAs and Piwi proteins and governs the methylation and subsequent repression of transposons. Its association with pi-bodies suggests a participation in the primary piRNAs metabolic process. Required prior to the pachytene stage to facilitate the production of multiple types of piRNAs, including those associated with repeats involved in the regulation of retrotransposons. May act by mediating protein-protein interactions during germ cell maturation. This chain is Ankyrin repeat, SAM and basic leucine zipper domain-containing protein 1 (ASZ1), found in Neofelis nebulosa (Clouded leopard).